The sequence spans 392 residues: 8-amino-7-oxononanoate synthase (392 aa).

Residue Arg19 participates in substrate binding. 106 to 107 lines the pyridoxal 5'-phosphate pocket; sequence GY. His131 contacts substrate. Ser176, His204, and Thr233 together coordinate pyridoxal 5'-phosphate. Lys236 bears the N6-(pyridoxal phosphate)lysine mark. Thr350 serves as a coordination point for substrate.

This sequence belongs to the class-II pyridoxal-phosphate-dependent aminotransferase family. BioF subfamily. In terms of assembly, homodimer. Pyridoxal 5'-phosphate serves as cofactor.

The enzyme catalyses 6-carboxyhexanoyl-[ACP] + L-alanine + H(+) = (8S)-8-amino-7-oxononanoate + holo-[ACP] + CO2. Its pathway is cofactor biosynthesis; biotin biosynthesis. In terms of biological role, catalyzes the decarboxylative condensation of pimeloyl-[acyl-carrier protein] and L-alanine to produce 8-amino-7-oxononanoate (AON), [acyl-carrier protein], and carbon dioxide. The protein is 8-amino-7-oxononanoate synthase of Stutzerimonas stutzeri (strain A1501) (Pseudomonas stutzeri).